Consider the following 307-residue polypeptide: Phosphate import ATP-binding protein PstB (307 aa).

The interval 1–30 (MSETTYTTTEDTDDTNSTDSMVGTTTGETD) is disordered. Positions 48 to 302 (LGVDDLDVYY…PQSERVEDYI (255 aa)) constitute an ABC transporter domain. 80–87 (GPSGCGKS) provides a ligand contact to ATP.

It belongs to the ABC transporter superfamily. Phosphate importer (TC 3.A.1.7) family. As to quaternary structure, the complex is composed of two ATP-binding proteins (PstB), two transmembrane proteins (PstC and PstA) and a solute-binding protein (PstS).

It localises to the cell membrane. It catalyses the reaction phosphate(out) + ATP + H2O = ADP + 2 phosphate(in) + H(+). Functionally, part of the ABC transporter complex PstSACB involved in phosphate import. Responsible for energy coupling to the transport system. This chain is Phosphate import ATP-binding protein PstB, found in Haloquadratum walsbyi (strain DSM 16790 / HBSQ001).